A 62-amino-acid polypeptide reads, in one-letter code: Sperm protamine P1 (62 aa).

The disordered stretch occupies residues 1 to 62 (MARYRHSRSR…RYSRRRRRRY (62 aa)).

The protein belongs to the protamine P1 family. Testis.

It is found in the nucleus. Its subcellular location is the chromosome. Protamines substitute for histones in the chromatin of sperm during the haploid phase of spermatogenesis. They compact sperm DNA into a highly condensed, stable and inactive complex. The sequence is that of Sperm protamine P1 (PRM1) from Bettongia penicillata (Brush-tailed bettong).